The chain runs to 872 residues: Alanine--tRNA ligase (872 aa).

The Zn(2+) site is built by His561, His565, Cys662, and His666.

The protein belongs to the class-II aminoacyl-tRNA synthetase family. Zn(2+) serves as cofactor.

It localises to the cytoplasm. It carries out the reaction tRNA(Ala) + L-alanine + ATP = L-alanyl-tRNA(Ala) + AMP + diphosphate. In terms of biological role, catalyzes the attachment of alanine to tRNA(Ala) in a two-step reaction: alanine is first activated by ATP to form Ala-AMP and then transferred to the acceptor end of tRNA(Ala). Also edits incorrectly charged Ser-tRNA(Ala) and Gly-tRNA(Ala) via its editing domain. This Thiobacillus denitrificans (strain ATCC 25259 / T1) protein is Alanine--tRNA ligase.